A 138-amino-acid chain; its full sequence is Small ribosomal subunit protein uS11c (138 aa).

The segment at 1-21 is disordered; it reads MTKAIQKIGSRRNGRIASRKN. Basic residues predominate over residues 9–21; it reads GSRRNGRIASRKN.

The protein belongs to the universal ribosomal protein uS11 family. As to quaternary structure, part of the 30S ribosomal subunit.

The protein resides in the plastid. It localises to the chloroplast. The protein is Small ribosomal subunit protein uS11c of Ceratophyllum demersum (Rigid hornwort).